The primary structure comprises 291 residues: Nucleotide-binding protein RALTA_A0325 (291 aa).

8–15 (GISGSGKS) lines the ATP pocket. GTP is bound at residue 57-60 (DIRS).

The protein belongs to the RapZ-like family.

In terms of biological role, displays ATPase and GTPase activities. The chain is Nucleotide-binding protein RALTA_A0325 from Cupriavidus taiwanensis (strain DSM 17343 / BCRC 17206 / CCUG 44338 / CIP 107171 / LMG 19424 / R1) (Ralstonia taiwanensis (strain LMG 19424)).